A 464-amino-acid chain; its full sequence is Glutamate--tRNA ligase (464 aa).

Positions 10–20 match the 'HIGH' region motif; sequence PSPTGHLHLGG. Residues cysteine 99, cysteine 101, cysteine 126, and glutamate 128 each contribute to the Zn(2+) site. Residues 236–240 carry the 'KMSKS' region motif; it reads KLSKR. Lysine 239 contributes to the ATP binding site.

Belongs to the class-I aminoacyl-tRNA synthetase family. Glutamate--tRNA ligase type 1 subfamily. Monomer. Zn(2+) is required as a cofactor.

The protein localises to the cytoplasm. The catalysed reaction is tRNA(Glu) + L-glutamate + ATP = L-glutamyl-tRNA(Glu) + AMP + diphosphate. Functionally, catalyzes the attachment of glutamate to tRNA(Glu) in a two-step reaction: glutamate is first activated by ATP to form Glu-AMP and then transferred to the acceptor end of tRNA(Glu). The sequence is that of Glutamate--tRNA ligase from Oleidesulfovibrio alaskensis (strain ATCC BAA-1058 / DSM 17464 / G20) (Desulfovibrio alaskensis).